The sequence spans 104 residues: Urease subunit beta (104 aa).

The protein belongs to the urease beta subunit family. In terms of assembly, heterotrimer of UreA (gamma), UreB (beta) and UreC (alpha) subunits. Three heterotrimers associate to form the active enzyme.

Its subcellular location is the cytoplasm. It carries out the reaction urea + 2 H2O + H(+) = hydrogencarbonate + 2 NH4(+). It functions in the pathway nitrogen metabolism; urea degradation; CO(2) and NH(3) from urea (urease route): step 1/1. This Synechococcus sp. (strain RCC307) protein is Urease subunit beta.